Here is a 545-residue protein sequence, read N- to C-terminus: Glucose-6-phosphate isomerase (545 aa).

The Proton donor role is filled by E351. Active-site residues include H382 and K510.

This sequence belongs to the GPI family.

Its subcellular location is the cytoplasm. The enzyme catalyses alpha-D-glucose 6-phosphate = beta-D-fructose 6-phosphate. It functions in the pathway carbohydrate biosynthesis; gluconeogenesis. It participates in carbohydrate degradation; glycolysis; D-glyceraldehyde 3-phosphate and glycerone phosphate from D-glucose: step 2/4. Catalyzes the reversible isomerization of glucose-6-phosphate to fructose-6-phosphate. The sequence is that of Glucose-6-phosphate isomerase from Helicobacter pylori (strain HPAG1).